Here is a 538-residue protein sequence, read N- to C-terminus: Tetracenomycin C resistance and export protein (538 aa).

14 helical membrane passes run 28–48 (LLAV…VAIA), 65–85 (WITN…GKLG), 100–120 (GFAV…IVVF), 126–146 (LFGA…FPPG), 154–174 (IWSG…GLLV), 181–201 (AVFF…LVIL), 213–233 (FDVS…WGLI), 239–259 (GWGD…FAGF), 286–306 (VLMV…TFYL), 319–339 (VHLL…GIVI), 342–362 (FGPG…LWGM), 371–391 (MGIT…VMVG), 413–433 (QSAM…LMAS), and 494–514 (MGLA…VALF).

The protein belongs to the major facilitator superfamily. EmrB family.

It localises to the cell membrane. The protein operates within antibiotic biosynthesis; tetracenomycin C biosynthesis. Resistance to tetracenomycin C by an active tetracenomycin C efflux system which is probably energized by transmembrane electrochemical gradients. The sequence is that of Tetracenomycin C resistance and export protein (tcmA) from Streptomyces glaucescens.